The chain runs to 485 residues: Pentatricopeptide repeat-containing protein At1g62720 (485 aa).

PPR repeat units lie at residues 68-102, 103-137, 138-172, 173-207, 208-242, 243-277, 278-312, 313-347, 348-378, 380-414, 415-449, and 450-484; these read SIVD…GIGH, DLYS…GYEP, DVVT…GFRP, DVVI…GVRA, DAVT…DIVP, NVIT…CVDP, DVFT…GCLP, DVVT…GLVG, DTIT…MDSR, NIRT…EIEL, DITT…GLKP, and DVVS…GLLP.

This sequence belongs to the PPR family. P subfamily.

This is Pentatricopeptide repeat-containing protein At1g62720 from Arabidopsis thaliana (Mouse-ear cress).